The following is a 393-amino-acid chain: S-adenosylmethionine synthase (393 aa).

Position 9 (Glu-9) interacts with Mg(2+). His-15 serves as a coordination point for ATP. Glu-43 contributes to the K(+) binding site. Glu-56 and Gln-99 together coordinate L-methionine. ATP-binding positions include 167–169 (DGK), 235–238 (SGRF), Asp-246, 252–253 (RK), Ala-269, Lys-273, and Lys-277. Asp-246 provides a ligand contact to L-methionine. L-methionine is bound at residue Lys-277.

Belongs to the AdoMet synthase family. In terms of assembly, homotetramer. Mn(2+) serves as cofactor. Mg(2+) is required as a cofactor. It depends on Co(2+) as a cofactor. The cofactor is K(+).

The protein localises to the cytoplasm. The catalysed reaction is L-methionine + ATP + H2O = S-adenosyl-L-methionine + phosphate + diphosphate. It functions in the pathway amino-acid biosynthesis; S-adenosyl-L-methionine biosynthesis; S-adenosyl-L-methionine from L-methionine: step 1/1. Its function is as follows. Catalyzes the formation of S-adenosylmethionine from methionine and ATP. The reaction comprises two steps that are both catalyzed by the same enzyme: formation of S-adenosylmethionine (AdoMet) and triphosphate, and subsequent hydrolysis of the triphosphate. This is S-adenosylmethionine synthase (SAMS) from Gossypium hirsutum (Upland cotton).